Here is a 216-residue protein sequence, read N- to C-terminus: Somatotropin (216 aa).

The first 25 residues, 1 to 25, serve as a signal peptide directing secretion; that stretch reads MAPGSWFSPLLIAVVTLGLPQEAAA. H45 is a Zn(2+) binding site. Residues C78 and C189 are joined by a disulfide bond. E198 provides a ligand contact to Zn(2+). A disulfide bridge connects residues C206 and C214.

It belongs to the somatotropin/prolactin family.

It is found in the secreted. Growth hormone plays an important role in growth control. In Gallus gallus (Chicken), this protein is Somatotropin (GH).